Consider the following 679-residue polypeptide: Transketolase 10 (679 aa).

Residue His-40 participates in substrate binding. Residues His-80 and 129–131 contribute to the thiamine diphosphate site; that span reads GPL. Residue Asp-170 coordinates Mg(2+). Thiamine diphosphate contacts are provided by Gly-171 and Asn-200. Residues Asn-200 and Ile-202 each contribute to the Mg(2+) site. Positions 277, 371, and 398 each coordinate substrate. Position 277 (His-277) interacts with thiamine diphosphate. The thiamine diphosphate site is built by Glu-425 and Phe-452. Glu-425 (proton donor) is an active-site residue. Positions 476, 484, and 535 each coordinate substrate.

The protein belongs to the transketolase family. As to quaternary structure, homodimer. Mg(2+) serves as cofactor. The cofactor is Ca(2+). Mn(2+) is required as a cofactor. Requires Co(2+) as cofactor. It depends on thiamine diphosphate as a cofactor. Leaves.

It carries out the reaction D-sedoheptulose 7-phosphate + D-glyceraldehyde 3-phosphate = aldehydo-D-ribose 5-phosphate + D-xylulose 5-phosphate. Its function is as follows. Could be involved in the conversion of sugars, which are a major phenomenon in the rehydration process. In terms of biological role, catalyzes the transfer of a two-carbon ketol group from a ketose donor to an aldose acceptor, via a covalent intermediate with the cofactor thiamine pyrophosphate. The chain is Transketolase 10 (TKT10) from Craterostigma plantagineum (Blue gem).